The chain runs to 446 residues: Probable D-serine dehydratase (446 aa).

An N6-(pyridoxal phosphate)lysine modification is found at K116.

It belongs to the serine/threonine dehydratase family. DsdA subfamily. Requires pyridoxal 5'-phosphate as cofactor.

It carries out the reaction D-serine = pyruvate + NH4(+). This Bacillus anthracis (strain CDC 684 / NRRL 3495) protein is Probable D-serine dehydratase.